Consider the following 344-residue polypeptide: 3-isopropylmalate dehydrogenase (344 aa).

Residues R93, R103, R131, and D215 each contribute to the substrate site. Positions 215, 239, and 243 each coordinate Mg(2+). 273–285 (GSAPDIAGKGIAN) contributes to the NAD(+) binding site.

It belongs to the isocitrate and isopropylmalate dehydrogenases family. LeuB type 1 subfamily. Homodimer. Mg(2+) serves as cofactor. Mn(2+) is required as a cofactor.

It localises to the cytoplasm. The enzyme catalyses (2R,3S)-3-isopropylmalate + NAD(+) = 4-methyl-2-oxopentanoate + CO2 + NADH. It participates in amino-acid biosynthesis; L-leucine biosynthesis; L-leucine from 3-methyl-2-oxobutanoate: step 3/4. Functionally, catalyzes the oxidation of 3-carboxy-2-hydroxy-4-methylpentanoate (3-isopropylmalate) to 3-carboxy-4-methyl-2-oxopentanoate. The product decarboxylates to 4-methyl-2 oxopentanoate. In Streptococcus mutans serotype c (strain ATCC 700610 / UA159), this protein is 3-isopropylmalate dehydrogenase.